Here is a 311-residue protein sequence, read N- to C-terminus: Aspartate carbamoyltransferase catalytic subunit (311 aa).

Positions 55 and 56 each coordinate carbamoyl phosphate. Position 85 (K85) interacts with L-aspartate. Carbamoyl phosphate is bound by residues R106, H135, and Q138. Positions 168 and 230 each coordinate L-aspartate. Carbamoyl phosphate-binding residues include L268 and P269.

This sequence belongs to the aspartate/ornithine carbamoyltransferase superfamily. ATCase family. As to quaternary structure, heterododecamer (2C3:3R2) of six catalytic PyrB chains organized as two trimers (C3), and six regulatory PyrI chains organized as three dimers (R2).

The catalysed reaction is carbamoyl phosphate + L-aspartate = N-carbamoyl-L-aspartate + phosphate + H(+). Its pathway is pyrimidine metabolism; UMP biosynthesis via de novo pathway; (S)-dihydroorotate from bicarbonate: step 2/3. Catalyzes the condensation of carbamoyl phosphate and aspartate to form carbamoyl aspartate and inorganic phosphate, the committed step in the de novo pyrimidine nucleotide biosynthesis pathway. In Yersinia pestis, this protein is Aspartate carbamoyltransferase catalytic subunit.